The chain runs to 634 residues: DNA-directed RNA polymerase subunit gamma (634 aa).

Residues Cys-74, Cys-76, Cys-89, and Cys-92 each contribute to the Zn(2+) site. Positions 471, 473, and 475 each coordinate Mg(2+).

It belongs to the RNA polymerase beta' chain family. RpoC1 subfamily. As to quaternary structure, in cyanobacteria the RNAP catalytic core is composed of 2 alpha, 1 beta, 1 beta', 1 gamma and 1 omega subunit. When a sigma factor is associated with the core the holoenzyme is formed, which can initiate transcription. Requires Mg(2+) as cofactor. The cofactor is Zn(2+).

It carries out the reaction RNA(n) + a ribonucleoside 5'-triphosphate = RNA(n+1) + diphosphate. Its function is as follows. DNA-dependent RNA polymerase catalyzes the transcription of DNA into RNA using the four ribonucleoside triphosphates as substrates. The chain is DNA-directed RNA polymerase subunit gamma from Prochlorococcus marinus (strain MIT 9313).